A 117-amino-acid polypeptide reads, in one-letter code: Ig heavy chain V region 1-62-3 (117 aa).

The signal sequence occupies residues Met1–Phe19. Residues Gln20–Thr49 form a framework-1 region. The interval Ser50–His54 is complementarity-determining-1. A framework-2 region spans residues Trp55–Gly68. Residues Arg69–Ser85 form a complementarity-determining-2 region. The segment at Lys86–Arg117 is framework-3.

This chain is Ig heavy chain V region 1-62-3 (Ighv1-62-3), found in Mus musculus (Mouse).